A 284-amino-acid polypeptide reads, in one-letter code: D-tagatose-1,6-bisphosphate aldolase subunit GatY (284 aa).

The active-site Proton donor is the Asp82. Zn(2+)-binding residues include His83 and His180. Dihydroxyacetone phosphate is bound at residue Gly181. His208 lines the Zn(2+) pocket. Dihydroxyacetone phosphate-binding positions include 209–211 (GAS) and 230–233 (NVAT).

The protein belongs to the class II fructose-bisphosphate aldolase family. TagBP aldolase GatY subfamily. As to quaternary structure, forms a complex with GatZ. Zn(2+) serves as cofactor.

The catalysed reaction is D-tagatofuranose 1,6-bisphosphate = D-glyceraldehyde 3-phosphate + dihydroxyacetone phosphate. It functions in the pathway carbohydrate metabolism; D-tagatose 6-phosphate degradation; D-glyceraldehyde 3-phosphate and glycerone phosphate from D-tagatose 6-phosphate: step 2/2. In terms of biological role, catalytic subunit of the tagatose-1,6-bisphosphate aldolase GatYZ, which catalyzes the reversible aldol condensation of dihydroxyacetone phosphate (DHAP or glycerone-phosphate) with glyceraldehyde 3-phosphate (G3P) to produce tagatose 1,6-bisphosphate (TBP). Requires GatZ subunit for full activity and stability. Is involved in the catabolism of galactitol. The chain is D-tagatose-1,6-bisphosphate aldolase subunit GatY from Escherichia coli (strain SMS-3-5 / SECEC).